We begin with the raw amino-acid sequence, 236 residues long: Leucyl/phenylalanyl-tRNA--protein transferase (236 aa).

It belongs to the L/F-transferase family.

Its subcellular location is the cytoplasm. The enzyme catalyses N-terminal L-lysyl-[protein] + L-leucyl-tRNA(Leu) = N-terminal L-leucyl-L-lysyl-[protein] + tRNA(Leu) + H(+). The catalysed reaction is N-terminal L-arginyl-[protein] + L-leucyl-tRNA(Leu) = N-terminal L-leucyl-L-arginyl-[protein] + tRNA(Leu) + H(+). It catalyses the reaction L-phenylalanyl-tRNA(Phe) + an N-terminal L-alpha-aminoacyl-[protein] = an N-terminal L-phenylalanyl-L-alpha-aminoacyl-[protein] + tRNA(Phe). In terms of biological role, functions in the N-end rule pathway of protein degradation where it conjugates Leu, Phe and, less efficiently, Met from aminoacyl-tRNAs to the N-termini of proteins containing an N-terminal arginine or lysine. This chain is Leucyl/phenylalanyl-tRNA--protein transferase, found in Yersinia enterocolitica serotype O:8 / biotype 1B (strain NCTC 13174 / 8081).